Here is a 673-residue protein sequence, read N- to C-terminus: MKIGKTLWRYALLYRKLLITAVLLLTVAVGAELTGPFIGKKMIDDHILGIEKTWYEAAEKDKNAVQFHGVSYVREDRLQEPVSKAKEAHIYQVGMAFYFVDQAVSFDGNRTVSDGKLTITNGDKSRAYAAEKLTKQELFQFYQPEIKGMVLLICLYGGLLVFSVFFQYGQHYLLQMSANRIIQKMRQDVFSHIQKMPIRYFDNLPAGKVVARITNDTEAIRDLYVTVLSTFVTSGIYMFGIFTALFLLDVKLAFVCLAIVPIIWLWSVIYRRYASYYNQKIRSINSDINAKMNESIQGMTIIQAFRHQKETMREFEELNESHFYFQNRMLNLNSLMSHNLVNVIRNLAFVCLIWHFGGASLNAAGIVSIGVLYAFVDYLNRLFQPITGIVNQFSKLELARVSAGRVFELLEEKNTEEAGEPAKERALGRVEFRDVSFAYQEGEEVLKHISFTAQKGETVALVGHTGSGKSSILNLLFRFYDAQKGDVLIDGKSIYNMSRQELRSHMGIVLQDPYLFSGTIGSNVSLDDERMTEEEIKNALRQVGAEPLLKKLPKGINEPVIEKGSTLSSGERQLISFARALAFDPAILILDEATAHIDTETEAVIQKALDVVKQGRTTFVIAHRLSTIRNADQILVLDKGEIVERGNHEELMALEGQYYQMYELQKGQKHSIA.

A run of 5 helical transmembrane segments spans residues 18–38 (LITA…GPFI), 146–166 (IKGM…SVFF), 223–243 (LYVT…GIFT), 245–265 (LFLL…IIWL), and 347–367 (LAFV…AGIV). The ABC transmembrane type-1 domain occupies 18–398 (LITAVLLLTV…IVNQFSKLEL (381 aa)). Residues 430–664 (VEFRDVSFAY…EGQYYQMYEL (235 aa)) enclose the ABC transporter domain. Residue 463–470 (GHTGSGKS) participates in ATP binding.

It belongs to the ABC transporter superfamily. As to quaternary structure, heterodimer composed of YheH and YheI.

The protein localises to the cell membrane. Inhibited by ortho-vanadate. In terms of biological role, involved in the transport of four structurally unrelated drugs, including doxorubicin and mitoxantrone. Transmembrane domains (TMD) form a pore in the membrane and the ATP-binding domain (NBD) is responsible for energy generation. The protein is Probable multidrug resistance ABC transporter ATP-binding/permease protein YheH (yheH) of Bacillus subtilis (strain 168).